Reading from the N-terminus, the 850-residue chain is Envelope glycoprotein gp160 (850 aa).

Positions 1–28 are cleaved as a signal peptide; that stretch reads METQTSWLSLWRWGLMIFGMLMICSARE. Residues 29 to 678 lie on the Extracellular side of the membrane; that stretch reads NLWVTVYYGV…ISNWLWYIKI (650 aa). C50 and C70 are disulfide-bonded. N-linked (GlcNAc...) asparagine; by host glycans are attached at residues N84, N126, N133, N134, N139, N152, N156, N184, N193, N226, N230, N237, N258, N272, N285, N297, N327, N334, and N349. 5 cysteine pairs are disulfide-bonded: C115/C201, C122/C192, C127/C153, C214/C243, and C224/C235. The tract at residues 127–152 is V1; sequence CSDVNSNNSTDSNSSASNNSPEIMKN. The interval 153 to 192 is V2; it reads CSFNVTTEIRNKRKQEYALFYRQDVVPINSDNKSYILINC. The interval 292–325 is V3; that stretch reads CTRPNNNTRKGIHMGPGQVLYATGEIIGDIRKAY. A disulfide bond links C292 and C326. A CD4-binding loop region spans residues 357–367; sequence PSGGDIEITTH. Cystine bridges form between C371-C436 and C378-C409. The interval 378 to 409 is V4; the sequence is CNTSTLFNSSWDENNIKDTNSTNDNTTITIPC. N379, N385, N397, N402, N433, N439, N453, and N457 each carry an N-linked (GlcNAc...) asparagine; by host glycan. The interval 447–467 is disordered; that stretch reads RDGGNRNGSENGTETFRPTGG. Polar residues predominate over residues 453 to 462; that stretch reads NGSENGTETF. 2 V5 regions span residues 453–465 and 454–465; these read NGSE…FRPT and GSENGTETFRPT. The segment at 506 to 526 is fusion peptide; that stretch reads AVGIGAVFLGFLGTAGSTMGA. The segment at 568–586 is immunosuppression; that stretch reads KQLQARVLAVERYLKDQQL. A disulfide bond links C592 and C598. N605, N610, N619, N631, and N668 each carry an N-linked (GlcNAc...) asparagine; by host glycan. Residues 627 to 661 adopt a coiled-coil conformation; it reads REINNYTGIIYSLIEEAQNQQETNEKDLLALDKWT. The tract at residues 656-677 is MPER; binding to GalCer; it reads ALDKWTNLWNWFNISNWLWYIK. The helical transmembrane segment at 679-699 threads the bilayer; that stretch reads FIMIIGGLIGLRIIFAVLAIV. Residues 700-850 are Cytoplasmic-facing; the sequence is NRVRQGYSPL…IRQGLERALL (151 aa). Positions 706–709 match the YXXL motif; contains endocytosis signal motif; the sequence is YSPL. The S-palmitoyl cysteine; by host moiety is linked to residue C758. The Di-leucine internalization motif motif lies at 849-850; it reads LL.

Belongs to the HIV-1 env protein family. The mature envelope protein (Env) consists of a homotrimer of non-covalently associated gp120-gp41 heterodimers. The resulting complex protrudes from the virus surface as a spike. There seems to be as few as 10 spikes on the average virion. Interacts with host CD4, CCR5 and CXCR4. Gp120 also interacts with the C-type lectins CD209/DC-SIGN and CLEC4M/DC-SIGNR (collectively referred to as DC-SIGN(R)). Gp120 and gp41 interact with GalCer. Gp120 interacts with host ITGA4/ITGB7 complex; on CD4+ T-cells, this interaction results in rapid activation of integrin ITGAL/LFA-1, which facilitates efficient cell-to-cell spreading of HIV-1. Gp120 interacts with cell-associated heparan sulfate; this interaction increases virus infectivity on permissive cells and may be involved in infection of CD4- cells. As to quaternary structure, the mature envelope protein (Env) consists of a homotrimer of non-covalently associated gp120-gp41 heterodimers. The resulting complex protrudes from the virus surface as a spike. There seems to be as few as 10 spikes on the average virion. In terms of processing, highly glycosylated by host. The high number of glycan on the protein is reffered to as 'glycan shield' because it contributes to hide protein sequence from adaptive immune system. Palmitoylation of the transmembrane protein and of Env polyprotein (prior to its proteolytic cleavage) is essential for their association with host cell membrane lipid rafts. Palmitoylation is therefore required for envelope trafficking to classical lipid rafts, but not for viral replication. Post-translationally, specific enzymatic cleavages in vivo yield mature proteins. Envelope glycoproteins are synthesized as an inactive precursor that is heavily N-glycosylated and processed likely by host cell furin in the Golgi to yield the mature SU and TM proteins. The cleavage site between SU and TM requires the minimal sequence [KR]-X-[KR]-R. About 2 of the 9 disulfide bonds of gp41 are reduced by P4HB/PDI, following binding to CD4 receptor.

The protein resides in the virion membrane. It is found in the host cell membrane. The protein localises to the host endosome membrane. Oligomerizes in the host endoplasmic reticulum into predominantly trimers. In a second time, gp160 transits in the host Golgi, where glycosylation is completed. The precursor is then proteolytically cleaved in the trans-Golgi and thereby activated by cellular furin or furin-like proteases to produce gp120 and gp41. In terms of biological role, attaches the virus to the host lymphoid cell by binding to the primary receptor CD4. This interaction induces a structural rearrangement creating a high affinity binding site for a chemokine coreceptor like CXCR4 and/or CCR5. Acts as a ligand for CD209/DC-SIGN and CLEC4M/DC-SIGNR, which are respectively found on dendritic cells (DCs), and on endothelial cells of liver sinusoids and lymph node sinuses. These interactions allow capture of viral particles at mucosal surfaces by these cells and subsequent transmission to permissive cells. HIV subverts the migration properties of dendritic cells to gain access to CD4+ T-cells in lymph nodes. Virus transmission to permissive T-cells occurs either in trans (without DCs infection, through viral capture and transmission), or in cis (following DCs productive infection, through the usual CD4-gp120 interaction), thereby inducing a robust infection. In trans infection, bound virions remain infectious over days and it is proposed that they are not degraded, but protected in non-lysosomal acidic organelles within the DCs close to the cell membrane thus contributing to the viral infectious potential during DCs' migration from the periphery to the lymphoid tissues. On arrival at lymphoid tissues, intact virions recycle back to DCs' cell surface allowing virus transmission to CD4+ T-cells. Functionally, acts as a class I viral fusion protein. Under the current model, the protein has at least 3 conformational states: pre-fusion native state, pre-hairpin intermediate state, and post-fusion hairpin state. During fusion of viral and target intracellular membranes, the coiled coil regions (heptad repeats) assume a trimer-of-hairpins structure, positioning the fusion peptide in close proximity to the C-terminal region of the ectodomain. The formation of this structure appears to drive apposition and subsequent fusion of viral and target cell membranes. Complete fusion occurs in host cell endosomes and is dynamin-dependent, however some lipid transfer might occur at the plasma membrane. The virus undergoes clathrin-dependent internalization long before endosomal fusion, thus minimizing the surface exposure of conserved viral epitopes during fusion and reducing the efficacy of inhibitors targeting these epitopes. Membranes fusion leads to delivery of the nucleocapsid into the cytoplasm. The protein is Envelope glycoprotein gp160 of Human immunodeficiency virus type 1 group M subtype J (isolate SE9173) (HIV-1).